The primary structure comprises 362 residues: uncharacterized protein (362 aa).

Belongs to the carbohydrate kinase PfkB family.

This is an uncharacterized protein from Escherichia coli (strain K12).